Here is a 99-residue protein sequence, read N- to C-terminus: Probable small ribosomal subunit protein cS23 (99 aa).

This sequence belongs to the chloroplast-specific ribosomal protein cS23 family. As to quaternary structure, part of the 30S ribosomal subunit.

Its function is as follows. Probably a ribosomal protein or a ribosome-associated protein. The polypeptide is Probable small ribosomal subunit protein cS23 (Synechococcus sp. (strain JA-2-3B'a(2-13)) (Cyanobacteria bacterium Yellowstone B-Prime)).